Reading from the N-terminus, the 347-residue chain is Inosamine-phosphate amidinotransferase 1 (347 aa).

Active-site residues include Asp-179 and His-227. The active-site Amidino-cysteine intermediate is Cys-332.

The protein belongs to the amidinotransferase family. In terms of assembly, homodimer.

The catalysed reaction is 1-amino-1-deoxy-scyllo-inositol 4-phosphate + L-arginine = 1-guanidino-1-deoxy-scyllo-inositol 4-phosphate + L-ornithine. The protein operates within antibiotic biosynthesis; streptomycin biosynthesis. Functionally, catalyzes two non-consecutive transamidination reactions. It converts scyllo-inosamine 4-phosphate into N-amidino-scyllo-inosamine 4-phosphate and N1-amidinostreptamine 6-phosphate into streptidine 6-phosphate. In Streptomyces griseus, this protein is Inosamine-phosphate amidinotransferase 1 (strB1).